The chain runs to 316 residues: DNA-directed RNA polymerase III subunit RPC6 (316 aa).

Ala-2 carries the post-translational modification N-acetylalanine. Residues Lys-5 and Lys-7 each participate in a glycyl lysine isopeptide (Lys-Gly) (interchain with G-Cter in SUMO2) cross-link. Residues Cys-287, Cys-290, Cys-296, and Cys-307 each coordinate [4Fe-4S] cluster.

It belongs to the eukaryotic RPC34/RPC39 RNA polymerase subunit family. In terms of assembly, component of the RNA polymerase III complex consisting of 17 subunits: a ten-subunit horseshoe-shaped catalytic core composed of POLR3A/RPC1, POLR3B/RPC2, POLR1C/RPAC1, POLR1D/RPAC2, POLR3K/RPC10, POLR2E/RPABC1, POLR2F/RPABC2, POLR2H/RPABC3, POLR2K/RPABC4 and POLR2L/RPABC5; a mobile stalk composed of two subunits POLR3H/RPC8 and CRCP/RPC9, protruding from the core and functioning primarily in transcription initiation; and additional subunits homologous to general transcription factors of the RNA polymerase II machinery, POLR3C/RPC3-POLR3F/RPC6-POLR3G/RPC7 heterotrimer required for transcription initiation and POLR3D/RPC4-POLR3E/RPC5 heterodimer involved in both transcription initiation and termination. Directly interacts with POLR3C. Interacts with TBP and TFIIIB90 and GTF3C4. Interacts with MAF1. As part of the RNA polymerase III complex, interacts with PKP2.

It is found in the nucleus. Functionally, DNA-dependent RNA polymerase catalyzes the transcription of DNA into RNA using the four ribonucleoside triphosphates as substrates. Specific peripheric component of RNA polymerase III (Pol III) which synthesizes small non-coding RNAs including 5S rRNA, snRNAs, tRNAs and miRNAs from at least 500 distinct genomic loci. Part of POLR3C/RPC3-POLR3F/RPC6-POLR3G/RPC7 heterotrimer that coordinates the dynamics of Pol III stalk and clamp modules during the transition from apo to elongation state. Pol III plays a key role in sensing and limiting infection by intracellular bacteria and DNA viruses, including varicella zoster virus. Acts as a nuclear and cytosolic DNA sensor detecting AT-rich DNA, involved in innate immune response. Can sense non-self dsDNA that serves as template for transcription into dsRNA. The non-self RNA polymerase III transcripts, such as Epstein-Barr virus-encoded RNAs (EBERs) induce type I interferon and NF-kappa-B through the RIG-I pathway. Preferentially binds double-stranded DNA (dsDNA). The protein is DNA-directed RNA polymerase III subunit RPC6 (POLR3F) of Bos taurus (Bovine).